We begin with the raw amino-acid sequence, 161 residues long: Ribosomal RNA large subunit methyltransferase H (161 aa).

S-adenosyl-L-methionine contacts are provided by residues leucine 78, glycine 110, and 129-134; that span reads LSRLTF.

It belongs to the RNA methyltransferase RlmH family. As to quaternary structure, homodimer.

It is found in the cytoplasm. The catalysed reaction is pseudouridine(1915) in 23S rRNA + S-adenosyl-L-methionine = N(3)-methylpseudouridine(1915) in 23S rRNA + S-adenosyl-L-homocysteine + H(+). Its function is as follows. Specifically methylates the pseudouridine at position 1915 (m3Psi1915) in 23S rRNA. This is Ribosomal RNA large subunit methyltransferase H from Heliobacterium modesticaldum (strain ATCC 51547 / Ice1).